The following is a 403-amino-acid chain: Probable eukaryotic initiation factor 4A (403 aa).

The interval 1-29 (MAQNDKIAPQDQDSFLDDQPGVRPIPSFD) is disordered. Positions 26–54 (PSFDDMPLHQNLLRGIYSYGFEKPSSIQQ) match the Q motif motif. The region spanning 57–230 (IAPFTRGGDI…KKFMRDPVRI (174 aa)) is the Helicase ATP-binding domain. 70–77 (AQSGTGKT) contacts ATP. The DEAD box motif lies at 178–181 (DEAD). Positions 241-401 (GIKQFFIAVE…ELPVDFAAYL (161 aa)) constitute a Helicase C-terminal domain.

The protein belongs to the DEAD box helicase family. eIF4A subfamily. EIF4F is a multi-subunit complex, the composition of which varies with external and internal environmental conditions. It is composed of at least EIF4A, EIF4E and EIF4G.

It catalyses the reaction ATP + H2O = ADP + phosphate + H(+). In terms of biological role, ATP-dependent RNA helicase which is a subunit of the eIF4F complex involved in cap recognition and is required for mRNA binding to ribosome. In the current model of translation initiation, eIF4A unwinds RNA secondary structures in the 5'-UTR of mRNAs which is necessary to allow efficient binding of the small ribosomal subunit, and subsequent scanning for the initiator codon. This Leishmania infantum protein is Probable eukaryotic initiation factor 4A.